The chain runs to 832 residues: Protein P (832 aa).

Positions 1–177 are terminal protein domain (TP); it reads MPLSYQHFRR…FCGSPYSWEQ (177 aa). A spacer region spans residues 178–335; sequence ELQHGAESFH…YCLSHIVNLL (158 aa). The disordered stretch occupies residues 186–229; it reads FHQQSSGILSRPPVGSSLQSKHSKSRLGLQSQQGHLARRQQGRS. The segment at 336–679 is polymerase/reverse transcriptase domain (RT); it reads EDWGPCAEHG…YLNLYPVARQ (344 aa). A Reverse transcriptase domain is found at 346 to 589; that stretch reads EHHIRTPRTP…YSLNFMGYVI (244 aa). Residues D418, D540, and D541 each contribute to the Mg(2+) site.

Belongs to the hepadnaviridae P protein family.

It catalyses the reaction DNA(n) + a 2'-deoxyribonucleoside 5'-triphosphate = DNA(n+1) + diphosphate. The enzyme catalyses Endonucleolytic cleavage to 5'-phosphomonoester.. With respect to regulation, activated by host HSP70 and HSP40 in vitro to be able to bind the epsilon loop of the pgRNA. Because deletion of the RNase H region renders the protein partly chaperone-independent, the chaperones may be needed indirectly to relieve occlusion of the RNA-binding site by this domain. Inhibited by several reverse-transcriptase inhibitors: Lamivudine, Adefovir and Entecavir. In terms of biological role, multifunctional enzyme that converts the viral RNA genome into dsDNA in viral cytoplasmic capsids. This enzyme displays a DNA polymerase activity that can copy either DNA or RNA templates, and a ribonuclease H (RNase H) activity that cleaves the RNA strand of RNA-DNA heteroduplexes in a partially processive 3'- to 5'-endonucleasic mode. Neo-synthesized pregenomic RNA (pgRNA) are encapsidated together with the P protein, and reverse-transcribed inside the nucleocapsid. Initiation of reverse-transcription occurs first by binding the epsilon loop on the pgRNA genome, and is initiated by protein priming, thereby the 5'-end of (-)DNA is covalently linked to P protein. Partial (+)DNA is synthesized from the (-)DNA template and generates the relaxed circular DNA (RC-DNA) genome. After budding and infection, the RC-DNA migrates in the nucleus, and is converted into a plasmid-like covalently closed circular DNA (cccDNA). The activity of P protein does not seem to be necessary for cccDNA generation, and is presumably released from (+)DNA by host nuclear DNA repair machinery. The polypeptide is Protein P (Hepatitis B virus genotype D (isolate Germany/1-91/1991) (HBV-D)).